Here is a 587-residue protein sequence, read N- to C-terminus: Tripartite motif-containing protein 29 (587 aa).

Residues 1–71 (MEGADACRSN…SGEGKSGLFS (71 aa)) form a disordered region. Phosphoserine occurs at positions 21, 28, 58, and 104. Y106 carries the post-translational modification Phosphotyrosine. A B box-type zinc finger spans residues 220-260 (FEARKCPLHGKTMELFCQTDQTCICYLCMFQEHKNHSTVTV). Zn(2+) contacts are provided by C225, H228, C247, and H252. Residues 259 to 348 (TVEEAKAEKE…AVDQVKVIVD (90 aa)) adopt a coiled-coil conformation. T476 carries the post-translational modification Phosphothreonine. S489 bears the Phosphoserine mark.

In terms of assembly, interacts with VIM and HINT1. Interacts with IKBKG/NEMO. Interacts with STING1.

The protein resides in the cytoplasm. It localises to the lysosome. Functionally, plays a crucial role in the regulation of macrophage activation in response to viral or bacterial infections within the respiratory tract. Mechanistically, TRIM29 interacts with IKBKG/NEMO in the lysosome where it induces its 'Lys-48' ubiquitination and subsequent degradation. In turn, the expression of type I interferons and the production of pro-inflammatory cytokines are inhibited. Additionally, induces the 'Lys-48' ubiquitination of STING1 in a similar way, leading to its degradation. This is Tripartite motif-containing protein 29 (Trim29) from Mus musculus (Mouse).